The sequence spans 1501 residues: Inactive protein tyrosine kinase pTKL (1501 aa).

N-linked (GlcNAc...) asparagine glycosylation is found at asparagine 64, asparagine 128, and asparagine 133. The span at 204-221 shows a compositional bias: basic residues; that stretch reads KKNKKNKKNKKKKNKKTK. The disordered stretch occupies residues 204–223; it reads KKNKKNKKNKKKKNKKTKNT. Asparagine 239, asparagine 242, asparagine 258, and asparagine 327 each carry an N-linked (GlcNAc...) asparagine glycan. The span at 257–273 shows a compositional bias: basic and acidic residues; that stretch reads MNISLHEKNDKKNEKKN. The tract at residues 257-276 is disordered; sequence MNISLHEKNDKKNEKKNEKK. In terms of domain architecture, SAM spans 301–366; it reads WSLREVIQWL…LQLIKNLQVM (66 aa). Residues 392-425 form a disordered region; that stretch reads NKNIKKGKNIKKEKKKKKEKNIKKEKKKKKKETK. The span at 394 to 424 shows a compositional bias: basic residues; the sequence is NIKKGKNIKKEKKKKKEKNIKKEKKKKKKET. The stretch at 399–433 forms a coiled coil; the sequence is KNIKKEKKKKKEKNIKKEKKKKKKETKKFNNMDKK. Residues asparagine 448, asparagine 463, and asparagine 471 are each glycosylated (N-linked (GlcNAc...) asparagine). The short motif at 483–486 is the RVxF motif 1 element; it reads KVSF. An N-linked (GlcNAc...) asparagine glycan is attached at asparagine 506. Low complexity predominate over residues 543–597; that stretch reads QLSSPLSSPLSSPSPSSSPSSSPSSSPSSSPSSSPSPSSSPSPSSSPSSSPSSSP. The disordered stretch occupies residues 543-607; it reads QLSSPLSSPL…SSPPSPLSYK (65 aa). Asparagine 652 carries an N-linked (GlcNAc...) asparagine glycan. The interval 659–678 is disordered; it reads IKKSKSKYNNDKKEQKKLPL. Over residues 666 to 675 the composition is skewed to basic and acidic residues; it reads YNNDKKEQKK. N-linked (GlcNAc...) asparagine glycosylation is found at asparagine 681, asparagine 712, asparagine 737, asparagine 811, and asparagine 819. ATP is bound by residues 836 to 844 and lysine 864; that span reads QNINNFGKY. 4 N-linked (GlcNAc...) asparagine glycosylation sites follow: asparagine 1024, asparagine 1031, asparagine 1074, and asparagine 1157. Residues 1088-1483 enclose the Protein kinase domain; that stretch reads FHYQHNVLCG…HILKTISTLY (396 aa). Positions 1238-1241 match the RVxF motif 2 motif; the sequence is KVLF. Asparagine 1382 is a glycosylation site (N-linked (GlcNAc...) asparagine).

It belongs to the protein kinase superfamily. TKL Ser/Thr protein kinase family. As to quaternary structure, interacts (via RVxF motif 1 and/or 2) with phosphatase PP1C. May interact (via SAM domain) with SERA5 (via C-terminus).

The protein localises to the parasitophorous vacuole. It is found in the host cell membrane. Its subcellular location is the host cytoplasm. It localises to the host cytoskeleton. The sequence is that of Inactive protein tyrosine kinase pTKL from Plasmodium falciparum (isolate 3D7).